An 812-amino-acid chain; its full sequence is MKEFPKNYNFTENEKKWQQIWQEKQIYAYNPNVAKEETYVIDTPPPTVSGQLHIGHVYSYTQTDFIVRFQRMMGKNIFYPMGFDDNGLPTERLVEKQKQIKAYNMERSEFIKICEEVVESEEEKFRSLFNQIALSVDWSLEYQTISPLSRKISQMSFLDLVQKEEIYRTNQPILWDPVDGTALAQADIEDKEQTSFMNYITFKTEQGDPLTIATTRPELLPACVAVFYHPDDGRYKHLAGKSAITPLFNEQVPLLADPLVRQDKGTGLVMCCTFGDQTDITWWKTHNLPLKTIITKKGTIDCQHETSIDGLKIKEARTKIIAILKEQELLIKQEDITHTVKCAERSGAPLEILTVPQWFVKTISHKEELLKRANELNWHPKNMKIRLENWINAISWDWCISRQRYFGVPFPVWYSKRVGEEGKILYADITQLPIDPLKDLPMGYSKEEVEPDYDVMDTWATSSVSPQLSTHGISDDFAVNKDRHDKLFPMDLRPQAHEIIRTWAFYTILKAHLHQNTLPWKNIMISGWCLAEDRSKMSKSKGNVLVPEKLLEQYGSDVIRYWSANSKLGADTAYSEDVMKNGKRLVNKLWSAAKFVFIHFDKLKGEDKKASLLDIKEKITNEFDKWMVNKLVELVKLATNELQNYEYANAMHLTEKFFWVVFCDNYLEISKTRSYDEEHKNPQGQYSSILTLYHVMQTLLKLFAPFMPHITEELYQILYSENSIHVKGSWVNYSDLNYEINAKGAEGLLEILDIVRKFKAEKNLSIKAPIKLLEVSGIVLSAELAEDLKNVTSADEIQFEMKDDKIKVNIIL.

Residues 46-56 (PTVSGQLHIGH) carry the 'HIGH' region motif. The short motif at 536-540 (KMSKS) is the 'KMSKS' region element. Lys539 serves as a coordination point for ATP.

The protein belongs to the class-I aminoacyl-tRNA synthetase family. ValS type 2 subfamily. As to quaternary structure, monomer.

It localises to the cytoplasm. The catalysed reaction is tRNA(Val) + L-valine + ATP = L-valyl-tRNA(Val) + AMP + diphosphate. In terms of biological role, catalyzes the attachment of valine to tRNA(Val). As ValRS can inadvertently accommodate and process structurally similar amino acids such as threonine, to avoid such errors, it has a 'posttransfer' editing activity that hydrolyzes mischarged Thr-tRNA(Val) in a tRNA-dependent manner. The protein is Valine--tRNA ligase of Rickettsia rickettsii (strain Iowa).